Here is a 118-residue protein sequence, read N- to C-terminus: Large ribosomal subunit protein bL20 (118 aa).

This sequence belongs to the bacterial ribosomal protein bL20 family.

In terms of biological role, binds directly to 23S ribosomal RNA and is necessary for the in vitro assembly process of the 50S ribosomal subunit. It is not involved in the protein synthesizing functions of that subunit. This is Large ribosomal subunit protein bL20 from Stutzerimonas stutzeri (strain A1501) (Pseudomonas stutzeri).